A 204-amino-acid chain; its full sequence is High frequency lysogenization protein HflD homolog (204 aa).

The protein belongs to the HflD family.

Its subcellular location is the cytoplasm. The protein localises to the cell inner membrane. This Ruthia magnifica subsp. Calyptogena magnifica protein is High frequency lysogenization protein HflD homolog.